We begin with the raw amino-acid sequence, 308 residues long: MMPPVRGTLTQGRILADLTWLRVGGPADWLFQPADEADLVQFLGALDPAVPVFPMGVGSNLIVRDGGLRAVVIRLGRGFNAIRIEGDRVIAGAAALDAHVARRAAEAGRDLTFLRTIPGSIGGAVRMNAGCYGSYVADHLIEVRAVTREGRAVTLPAAELGLAYRQSALPEGCVLTEATFRAEAGDPAELARRMDEQIARRDSSQPTKERSAGSTFRNPAGFSSTGRADDTHELKAWKLIDEAGLRGARRGGAQMSEMHSNFLINAGGATAADLEGLGEEVIKRVFQSSGIRLEWEIMRVGELPVNKE.

In terms of domain architecture, FAD-binding PCMH-type spans 22–185 (RVGGPADWLF…TEATFRAEAG (164 aa)). Residue Arg165 is part of the active site. Residues 197–211 (QIARRDSSQPTKERS) show a composition bias toward basic and acidic residues. Residues 197–228 (QIARRDSSQPTKERSAGSTFRNPAGFSSTGRA) form a disordered region. Over residues 212 to 226 (AGSTFRNPAGFSSTG) the composition is skewed to polar residues. Catalysis depends on Ser214, which acts as the Proton donor. Glu296 is a catalytic residue.

It belongs to the MurB family. The cofactor is FAD.

Its subcellular location is the cytoplasm. The enzyme catalyses UDP-N-acetyl-alpha-D-muramate + NADP(+) = UDP-N-acetyl-3-O-(1-carboxyvinyl)-alpha-D-glucosamine + NADPH + H(+). It functions in the pathway cell wall biogenesis; peptidoglycan biosynthesis. Cell wall formation. This Cereibacter sphaeroides (strain ATCC 17029 / ATH 2.4.9) (Rhodobacter sphaeroides) protein is UDP-N-acetylenolpyruvoylglucosamine reductase.